The chain runs to 265 residues: 5'-nucleotidase SurE (265 aa).

4 residues coordinate a divalent metal cation: D8, D9, S41, and N100.

This sequence belongs to the SurE nucleotidase family. A divalent metal cation is required as a cofactor.

It localises to the cytoplasm. It carries out the reaction a ribonucleoside 5'-phosphate + H2O = a ribonucleoside + phosphate. In terms of biological role, nucleotidase that shows phosphatase activity on nucleoside 5'-monophosphates. This is 5'-nucleotidase SurE from Brevibacillus brevis (strain 47 / JCM 6285 / NBRC 100599).